A 421-amino-acid chain; its full sequence is UDP-N-acetylglucosamine 1-carboxyvinyltransferase 1 (421 aa).

Residue 22-23 (KN) participates in phosphoenolpyruvate binding. Arg-95 provides a ligand contact to UDP-N-acetyl-alpha-D-glucosamine. Cys-119 serves as the catalytic Proton donor. The residue at position 119 (Cys-119) is a 2-(S-cysteinyl)pyruvic acid O-phosphothioketal. UDP-N-acetyl-alpha-D-glucosamine contacts are provided by residues 124-128 (RPIEQ), Asp-308, and Val-330.

This sequence belongs to the EPSP synthase family. MurA subfamily.

The protein resides in the cytoplasm. The enzyme catalyses phosphoenolpyruvate + UDP-N-acetyl-alpha-D-glucosamine = UDP-N-acetyl-3-O-(1-carboxyvinyl)-alpha-D-glucosamine + phosphate. The protein operates within cell wall biogenesis; peptidoglycan biosynthesis. Its function is as follows. Cell wall formation. Adds enolpyruvyl to UDP-N-acetylglucosamine. This chain is UDP-N-acetylglucosamine 1-carboxyvinyltransferase 1, found in Staphylococcus aureus (strain MW2).